The sequence spans 230 residues: Broad-specificity phosphatase YOR283W (230 aa).

His-24 functions as the Tele-phosphohistidine intermediate in the catalytic mechanism. Substrate-binding positions include 36 to 37 and 102 to 105; these read QG and ERYM. Glu-102 acts as the Proton donor/acceptor in catalysis.

This sequence belongs to the phosphoglycerate mutase family. BPG-dependent PGAM subfamily.

The protein resides in the cytoplasm. Its subcellular location is the nucleus. Metal-independent phosphatase active against a broad range of phosphorylated substrates including nucleoside tri- and diphosphates, phosphorylated organic acids, and amino acids. Shows no activity against phytic acid, phosphorylated carbohydrates, and nucleoside monophosphates. In Saccharomyces cerevisiae (strain ATCC 204508 / S288c) (Baker's yeast), this protein is Broad-specificity phosphatase YOR283W.